The following is a 292-amino-acid chain: Aspartate carbamoyltransferase catalytic subunit (292 aa).

Residues arginine 49 and threonine 50 each contribute to the carbamoyl phosphate site. Lysine 77 is an L-aspartate binding site. Positions 99, 127, and 130 each coordinate carbamoyl phosphate. L-aspartate contacts are provided by arginine 161 and arginine 211. Positions 250 and 251 each coordinate carbamoyl phosphate.

Belongs to the aspartate/ornithine carbamoyltransferase superfamily. ATCase family. As to quaternary structure, heterododecamer (2C3:3R2) of six catalytic PyrB chains organized as two trimers (C3), and six regulatory PyrI chains organized as three dimers (R2).

It carries out the reaction carbamoyl phosphate + L-aspartate = N-carbamoyl-L-aspartate + phosphate + H(+). It participates in pyrimidine metabolism; UMP biosynthesis via de novo pathway; (S)-dihydroorotate from bicarbonate: step 2/3. Catalyzes the condensation of carbamoyl phosphate and aspartate to form carbamoyl aspartate and inorganic phosphate, the committed step in the de novo pyrimidine nucleotide biosynthesis pathway. This is Aspartate carbamoyltransferase catalytic subunit from Campylobacter lari (strain RM2100 / D67 / ATCC BAA-1060).